Reading from the N-terminus, the 273-residue chain is Protein N-terminal and lysine N-methyltransferase EFM7 (273 aa).

Residues 1-32 (MSDIEDLASGGLFDEPKDFYKPEEQPGSDSYA) form a disordered region. A compositionally biased stretch (basic and acidic residues) spans 14–24 (DEPKDFYKPEE). Residues tryptophan 65, 92-94 (GAG), aspartate 114, tryptophan 161, and serine 183 contribute to the S-adenosyl-L-methionine site.

Belongs to the class I-like SAM-binding methyltransferase superfamily. EFM7 family.

The protein resides in the cytoplasm. Its function is as follows. S-adenosyl-L-methionine-dependent protein methyltransferase that trimethylates the N-terminal glycine 'Gly-2' of elongation factor 1-alpha, before also catalyzing the mono- and dimethylation of 'Lys-3'. In Yarrowia lipolytica (strain CLIB 122 / E 150) (Yeast), this protein is Protein N-terminal and lysine N-methyltransferase EFM7.